The sequence spans 290 residues: Small ribosomal subunit protein uS2 (290 aa).

Low complexity predominate over residues 263–282; sequence ATAGATWEAEAGGDWAAESA. The segment at 263–290 is disordered; sequence ATAGATWEAEAGGDWAAESAQPNPETKW.

It belongs to the universal ribosomal protein uS2 family. As to quaternary structure, component of the small ribosomal subunit. Mature ribosomes consist of a small (40S) and a large (60S) subunit. The 40S subunit contains about 33 different proteins and 1 molecule of RNA (18S). The 60S subunit contains about 49 different proteins and 3 molecules of RNA (25S, 5.8S and 5S). Interacts with rps21.

It localises to the cytoplasm. Its function is as follows. Required for the assembly and/or stability of the 40S ribosomal subunit. Required for the processing of the 20S rRNA-precursor to mature 18S rRNA in a late step of the maturation of 40S ribosomal subunits. In Talaromyces stipitatus (strain ATCC 10500 / CBS 375.48 / QM 6759 / NRRL 1006) (Penicillium stipitatum), this protein is Small ribosomal subunit protein uS2 (rps0).